Consider the following 566-residue polypeptide: Endoglucanase B (566 aa).

The N-terminal stretch at 1 to 30 (MKKRRSSKVILSLAIVVALLAAVEPNAALA) is a signal peptide. Residue Glu-177 is the Proton donor of the active site. The active-site Nucleophile is the Glu-299.

Belongs to the glycosyl hydrolase 5 (cellulase A) family.

The enzyme catalyses Endohydrolysis of (1-&gt;4)-beta-D-glucosidic linkages in cellulose, lichenin and cereal beta-D-glucans.. This chain is Endoglucanase B (celB), found in Paenibacillus lautus (Bacillus lautus).